The following is a 307-amino-acid chain: Mitochondrial glycine transporter YMC1 (307 aa).

Solcar repeat units lie at residues 26–106 (VKDL…MKRF), 121–204 (PQYY…LIAN), and 218–305 (PAWK…AMRL). A run of 6 helical transmembrane segments spans residues 29–49 (LLAG…FDTT), 83–103 (LTPL…NEAM), 118–138 (LSLP…SFLA), 183–203 (TILR…ALIA), 223–243 (CIFG…LDVI), and 277–298 (FFKG…TFAT).

Belongs to the mitochondrial carrier (TC 2.A.29) family.

Its subcellular location is the mitochondrion inner membrane. Secondary mitochondrial glycine transporter required for the biosynthesis of heme at high glycine concentrations. Imports the precursor glycine into the mitochondrial matrix, where it is condensed with succinyl-CoA to produce 5-aminolevulinate (ALA), the first step of heme biosynthesis. This is Mitochondrial glycine transporter YMC1 from Saccharomyces cerevisiae (strain ATCC 204508 / S288c) (Baker's yeast).